Reading from the N-terminus, the 321-residue chain is Small ribosomal subunit biogenesis GTPase RsgA (321 aa).

The 160-residue stretch at 89 to 248 (QSWINRPPVA…VADTPGFNRP (160 aa)) folds into the CP-type G domain. GTP-binding positions include 138 to 141 (TKRD) and 190 to 198 (GPSGVGKTS). Residues C273, C278, H280, and C286 each coordinate Zn(2+).

Belongs to the TRAFAC class YlqF/YawG GTPase family. RsgA subfamily. Monomer. Associates with 30S ribosomal subunit, binds 16S rRNA. Zn(2+) is required as a cofactor.

Its subcellular location is the cytoplasm. Its function is as follows. One of several proteins that assist in the late maturation steps of the functional core of the 30S ribosomal subunit. Helps release RbfA from mature subunits. May play a role in the assembly of ribosomal proteins into the subunit. Circularly permuted GTPase that catalyzes slow GTP hydrolysis, GTPase activity is stimulated by the 30S ribosomal subunit. The sequence is that of Small ribosomal subunit biogenesis GTPase RsgA from Prochlorococcus marinus (strain MIT 9303).